The primary structure comprises 503 residues: Lysine--tRNA ligase (503 aa).

Mg(2+)-binding residues include Glu414 and Glu421.

Belongs to the class-II aminoacyl-tRNA synthetase family. In terms of assembly, homodimer. The cofactor is Mg(2+).

It localises to the cytoplasm. It catalyses the reaction tRNA(Lys) + L-lysine + ATP = L-lysyl-tRNA(Lys) + AMP + diphosphate. The protein is Lysine--tRNA ligase of Neisseria meningitidis serogroup A / serotype 4A (strain DSM 15465 / Z2491).